The following is a 296-amino-acid chain: MAAVSSAASLRGADYENGLRGGAGPSGGGQDPGEDDPMGRGTLDLDLELLGQGRRSRRVGGRTAPGRRSGGRGGSGGGGAGGLEELEDEELEEEEPGELTGDQTIEDPELEAIKARVREMEEEAEKLKELQNEVEKQMNMSPPPGNAGPVIMSIEEKMEADARSIYVGNVDYGATAEELEAHFHGCGSVNRVTILCDKYTGHPKGFAYIEFSDKESVRTSLALDESLFRGRQIKVVPKRTNRPGISTTDRGFPRARYRARASSYSSRSRFYSGYTPRPRGRVYRGRARVTSWYTPY.

The disordered stretch occupies residues 1 to 102; it reads MAAVSSAASL…EEEPGELTGD (102 aa). Composition is skewed to gly residues over residues 19 to 31 and 71 to 82; these read LRGGAGPSGGGQD and GRGGSGGGGAGG. The segment covering 84 to 97 has biased composition (acidic residues); that stretch reads EELEDEELEEEEPG. Positions 107 to 141 form a coiled coil; that stretch reads DPELEAIKARVREMEEEAEKLKELQNEVEKQMNMS. Residues 146 to 296 form a necessary for homooligomerization region; the sequence is NAGPVIMSIE…ARVTSWYTPY (151 aa). An RRM domain is found at 163 to 240; the sequence is RSIYVGNVDY…RQIKVVPKRT (78 aa).

As to quaternary structure, monomer and homooligomer. Binds RNA as a monomer and oligomerizes when bound to poly(A).

It is found in the nucleus. The protein localises to the cytoplasm. In terms of biological role, involved in the 3'-end formation of mRNA precursors (pre-mRNA) by the addition of a poly(A) tail of 200-250 nt to the upstream cleavage product. Stimulates poly(A) polymerase (PAPOLA) conferring processivity on the poly(A) tail elongation reaction and also controls the poly(A) tail length. Increases the affinity of poly(A) polymerase for RNA. Binds to poly(A) and to poly(G) with high affinity. May protect the poly(A) tail from degradation. The sequence is that of Polyadenylate-binding protein 2 from Xenopus tropicalis (Western clawed frog).